Here is a 1788-residue protein sequence, read N- to C-terminus: Protein TIC 214 (1788 aa).

6 helical membrane passes run 25 to 45 (IINS…FSIG), 70 to 90 (IGFI…PLHL), 95 to 115 (PHTI…WNNH), 132 to 152 (LNIQ…HFIL), 180 to 200 (VGWL…LFWI), and 223 to 243 (IFSI…PSPL). Disordered regions lie at residues 248-297 (LKKT…EEKE) and 1482-1526 (DLEN…DFDR). 2 stretches are compositionally biased toward basic and acidic residues: residues 253-277 (KREE…EKGT) and 1513-1526 (PLKK…DFDR).

The protein belongs to the TIC214 family. In terms of assembly, part of the Tic complex.

The protein localises to the plastid. It is found in the chloroplast inner membrane. Involved in protein precursor import into chloroplasts. May be part of an intermediate translocation complex acting as a protein-conducting channel at the inner envelope. The polypeptide is Protein TIC 214 (Ranunculus macranthus (Large buttercup)).